Reading from the N-terminus, the 149-residue chain is Endothelin-1 (149 aa).

Positions 1–33 (AAETVVSGAELSLTANSGGEKTPPHAPGLLRRS) are excised as a propeptide. Positions 6–26 (VSGAELSLTANSGGEKTPPHA) are disordered. 2 cysteine pairs are disulfide-bonded: Cys36-Cys50 and Cys38-Cys46. Residues 57 to 149 (VNTPGHIAPY…ISQQLGNGKK (93 aa)) constitute a propeptide that is removed on maturation. The endothelin-like stretch occupies residues 93–107 (CQCANQKDKKCWNFC).

This sequence belongs to the endothelin/sarafotoxin family.

It localises to the secreted. Endothelins are endothelium-derived vasoconstrictor peptides. Probable ligand for G-protein coupled receptors EDNRA and EDNRB which activates PTK2B, BCAR1, BCAR3 and, GTPases RAP1 and RHOA cascade in glomerular mesangial cells. Also binds the DEAR/FBXW7-AS1 receptor. Promotes mesenteric arterial wall remodeling via activation of ROCK signaling and subsequent colocalization of NFATC3 with F-actin filaments. NFATC3 then translocates to the nucleus where it subsequently promotes the transcription of the smooth muscle hypertrophy and differentiation marker ACTA2. The chain is Endothelin-1 (EDN1) from Cavia porcellus (Guinea pig).